The primary structure comprises 323 residues: Sphingolipid delta(4)-desaturase/C4-monooxygenase DES2 (323 aa).

Gly2 carries N-myristoyl glycine lipidation. Transmembrane regions (helical) follow at residues 45 to 65 (WAVL…RGLA) and 68 to 88 (WLLF…TLAI). The Histidine box-1 signature appears at 89-93 (HDISH). The required for C4-hydroxylase activity stretch occupies residues 95 to 99 (AAFGT). Residues 128–132 (HVDHH) carry the Histidine box-2 motif. The chain crosses the membrane as a helical span at residues 210–231 (VYLLASSFLGLGLHPISGHFVA). Positions 259–263 (HVEHH) match the Histidine box-3 motif.

It belongs to the fatty acid desaturase type 1 family. DEGS subfamily. Highly expressed in skin, intestine and kidney.

It is found in the endoplasmic reticulum membrane. The catalysed reaction is a dihydroceramide + 2 Fe(II)-[cytochrome b5] + O2 + 2 H(+) = a phytoceramide + 2 Fe(III)-[cytochrome b5] + H2O. It catalyses the reaction an N-acylsphinganine + 2 Fe(II)-[cytochrome b5] + O2 + 2 H(+) = an N-acylsphing-4-enine + 2 Fe(III)-[cytochrome b5] + 2 H2O. It carries out the reaction N-octanoylsphinganine + 2 Fe(II)-[cytochrome b5] + O2 + 2 H(+) = N-octanoyl-4-hydroxysphinganine + 2 Fe(III)-[cytochrome b5] + H2O. The enzyme catalyses an N-acylsphinganine + 2 Fe(II)-[cytochrome b5] + O2 + 2 H(+) = an N-acyl-(4R)-4-hydroxysphinganine + 2 Fe(III)-[cytochrome b5] + H2O. It functions in the pathway membrane lipid metabolism; sphingolipid biosynthesis. In terms of biological role, bifunctional enzyme which acts both as a sphingolipid delta(4)-desaturase and a sphingolipid C4-monooxygenase. The polypeptide is Sphingolipid delta(4)-desaturase/C4-monooxygenase DES2 (Homo sapiens (Human)).